The following is a 203-amino-acid chain: Inosine triphosphate pyrophosphatase (203 aa).

10-15 is an ITP binding site; it reads TGNQNK. Glutamate 40 contacts Mg(2+). Residues lysine 52, 68–69, lysine 85, 145–148, lysine 168, and 173–174 contribute to the ITP site; these read DT, FGWD, and HR.

Belongs to the HAM1 NTPase family. As to quaternary structure, homodimer. The cofactor is Mg(2+). It depends on Mn(2+) as a cofactor.

Its subcellular location is the cytoplasm. The enzyme catalyses ITP + H2O = IMP + diphosphate + H(+). It catalyses the reaction dITP + H2O = dIMP + diphosphate + H(+). It carries out the reaction XTP + H2O = XMP + diphosphate + H(+). Its function is as follows. Pyrophosphatase that hydrolyzes non-canonical purine nucleotides such as inosine triphosphate (ITP), deoxyinosine triphosphate (dITP) or xanthosine 5'-triphosphate (XTP) to their respective monophosphate derivatives. The enzyme does not distinguish between the deoxy- and ribose forms. Probably excludes non-canonical purines from RNA and DNA precursor pools, thus preventing their incorporation into RNA and DNA and avoiding chromosomal lesions. This is Inosine triphosphate pyrophosphatase from Nematostella vectensis (Starlet sea anemone).